A 197-amino-acid chain; its full sequence is Probable 26S proteasome non-ATPase regulatory subunit 9 (197 aa).

In terms of domain architecture, PDZ spans Lys75–Glu166.

It belongs to the proteasome subunit p27 family.

Functionally, acts as a chaperone during the assembly of the 26S proteasome, specifically of the base subcomplex of the 19S regulatory complex (RC). The polypeptide is Probable 26S proteasome non-ATPase regulatory subunit 9 (psmd-9) (Caenorhabditis elegans).